The sequence spans 172 residues: 3-hydroxydecanoyl-[acyl-carrier-protein] dehydratase (172 aa).

The active site involves histidine 71.

It belongs to the thioester dehydratase family. FabA subfamily. Homodimer.

The protein localises to the cytoplasm. The enzyme catalyses a (3R)-hydroxyacyl-[ACP] = a (2E)-enoyl-[ACP] + H2O. It catalyses the reaction (3R)-hydroxydecanoyl-[ACP] = (2E)-decenoyl-[ACP] + H2O. It carries out the reaction (2E)-decenoyl-[ACP] = (3Z)-decenoyl-[ACP]. It participates in lipid metabolism; fatty acid biosynthesis. In terms of biological role, necessary for the introduction of cis unsaturation into fatty acids. Catalyzes the dehydration of (3R)-3-hydroxydecanoyl-ACP to E-(2)-decenoyl-ACP and then its isomerization to Z-(3)-decenoyl-ACP. Can catalyze the dehydratase reaction for beta-hydroxyacyl-ACPs with saturated chain lengths up to 16:0, being most active on intermediate chain length. The sequence is that of 3-hydroxydecanoyl-[acyl-carrier-protein] dehydratase from Erwinia tasmaniensis (strain DSM 17950 / CFBP 7177 / CIP 109463 / NCPPB 4357 / Et1/99).